A 503-amino-acid polypeptide reads, in one-letter code: MSKVIGKVSQIIGPVVDVVFNGKDVELPKIYDSLEITKKDGTLLVLEVQSHIGENTVRTISMDSTDGLSRGYEVVGTGNPIKMPIGADVYGRLFNVIGDAIDGLGNLPKDGDNGMSIHRQAPRFEDLSTSSEVLFTGIKVIDLIEPYSKGGKIGLFGGAGVGKTVLIQELINNIAKGHGGLSVFAGVGERTREGNDLLREMLESGIIKYGDDFMHSMENGGWDLSKVDMPGMRESKATFVFGQMNEPPGARARVALSGLSIAEYFRDGAGSDQGKDVLFFVDNIFRFTQAGSEVSALLGRMPSAVGYQPTLATEMGAMQERITSTNKGSITSVQAVYVPADDLTDPAPATTFAHLDATTVLSRKIAELGIYPAVDPLDSTSRILTPQILGDEHYDCAQRVKEILQKYKQLQDIIAILGMEELSEEDKLSVSRARRVQRFLSQPFHVAEQFTGLKGVLVDIKDTIKGFNMIIDGELDHLPEAAFNLKGTIEEAIEAGEKMLAEA.

157 to 164 (GGAGVGKT) is a binding site for ATP.

The protein belongs to the ATPase alpha/beta chains family. F-type ATPases have 2 components, CF(1) - the catalytic core - and CF(0) - the membrane proton channel. CF(1) has five subunits: alpha(3), beta(3), gamma(1), delta(1), epsilon(1). CF(0) has three main subunits: a(1), b(2) and c(9-12). The alpha and beta chains form an alternating ring which encloses part of the gamma chain. CF(1) is attached to CF(0) by a central stalk formed by the gamma and epsilon chains, while a peripheral stalk is formed by the delta and b chains.

It localises to the cell inner membrane. It carries out the reaction ATP + H2O + 4 H(+)(in) = ADP + phosphate + 5 H(+)(out). In terms of biological role, produces ATP from ADP in the presence of a proton gradient across the membrane. The catalytic sites are hosted primarily by the beta subunits. The sequence is that of ATP synthase subunit beta from Flavobacterium psychrophilum (strain ATCC 49511 / DSM 21280 / CIP 103535 / JIP02/86).